The chain runs to 378 residues: AA13 family lytic polysaccharide monooxygenase A (378 aa).

A signal peptide spans 1 to 17 (MKWSVIQALALASGVQA). His-18 contacts Cu(2+). Residue His-18 is modified to Methylhistidine. The Chitin-binding type-4 domain maps to 18–244 (HGYLTFPMSR…PQIYLTCADI (227 aa)). Cystine bridges form between Cys-39/Cys-42, Cys-65/Cys-241, Cys-101/Cys-199, Cys-117/Cys-144, Cys-152/Cys-160, Cys-166/Cys-172, and Cys-180/Cys-188. His-108 contacts Cu(2+). Asn-221 carries an N-linked (GlcNAc...) asparagine glycan. Residue Tyr-238 participates in Cu(2+) binding. Residues 250 to 263 (DSQSPPTTTTTSTP) show a composition bias toward low complexity. Positions 250 to 272 (DSQSPPTTTTTSTPASPPPTSCA) are disordered. Residues 272 to 378 (ATPAASVAVT…GTATVDTAWK (107 aa)) form the CBM20 domain.

This sequence belongs to the polysaccharide monooxygenase AA13 family. Cu(2+) serves as cofactor. O-mannosylated.

It localises to the secreted. It catalyses the reaction starch + reduced acceptor + O2 = D-glucono-1,5-lactone-terminated malto-oligosaccharides + short-chain malto-oligosaccharides + acceptor + H2O.. With respect to regulation, activity is inhibited by both beta-cyclodextrin or amylose that block the access to the active site. Functionally, starch-active lytic polysaccharide monooxygenase that oxidizes the C1 position of starch substrates. Catalysis by LPMOs requires the reduction of the active-site copper from Cu(II) to Cu(I) by a reducing agent and H(2)O(2) or O(2) as a cosubstrate. The protein is AA13 family lytic polysaccharide monooxygenase A of Pyricularia oryzae (strain 70-15 / ATCC MYA-4617 / FGSC 8958) (Rice blast fungus).